The sequence spans 198 residues: Imidazoleglycerol-phosphate dehydratase (198 aa).

This sequence belongs to the imidazoleglycerol-phosphate dehydratase family.

The protein resides in the cytoplasm. The catalysed reaction is D-erythro-1-(imidazol-4-yl)glycerol 3-phosphate = 3-(imidazol-4-yl)-2-oxopropyl phosphate + H2O. The protein operates within amino-acid biosynthesis; L-histidine biosynthesis; L-histidine from 5-phospho-alpha-D-ribose 1-diphosphate: step 6/9. The protein is Imidazoleglycerol-phosphate dehydratase of Gluconacetobacter diazotrophicus (strain ATCC 49037 / DSM 5601 / CCUG 37298 / CIP 103539 / LMG 7603 / PAl5).